Here is a 249-residue protein sequence, read N- to C-terminus: Tryptophan synthase alpha chain (249 aa).

Catalysis depends on proton acceptor residues Glu43 and Asp54.

This sequence belongs to the TrpA family. As to quaternary structure, tetramer of two alpha and two beta chains.

It catalyses the reaction (1S,2R)-1-C-(indol-3-yl)glycerol 3-phosphate + L-serine = D-glyceraldehyde 3-phosphate + L-tryptophan + H2O. It functions in the pathway amino-acid biosynthesis; L-tryptophan biosynthesis; L-tryptophan from chorismate: step 5/5. Functionally, the alpha subunit is responsible for the aldol cleavage of indoleglycerol phosphate to indole and glyceraldehyde 3-phosphate. The polypeptide is Tryptophan synthase alpha chain (Campylobacter jejuni subsp. jejuni serotype O:6 (strain 81116 / NCTC 11828)).